The chain runs to 204 residues: Large ribosomal subunit protein uL4 (204 aa).

The disordered stretch occupies residues 49–74 (AKKRGEVSGGGKKPWSQKGGGRARAG). The segment covering 55-71 (VSGGGKKPWSQKGGGRA) has biased composition (gly residues).

Belongs to the universal ribosomal protein uL4 family. In terms of assembly, part of the 50S ribosomal subunit.

Its function is as follows. One of the primary rRNA binding proteins, this protein initially binds near the 5'-end of the 23S rRNA. It is important during the early stages of 50S assembly. It makes multiple contacts with different domains of the 23S rRNA in the assembled 50S subunit and ribosome. Functionally, forms part of the polypeptide exit tunnel. The sequence is that of Large ribosomal subunit protein uL4 from Wolinella succinogenes (strain ATCC 29543 / DSM 1740 / CCUG 13145 / JCM 31913 / LMG 7466 / NCTC 11488 / FDC 602W) (Vibrio succinogenes).